The chain runs to 192 residues: dTTP/UTP pyrophosphatase (192 aa).

Aspartate 70 (proton acceptor) is an active-site residue.

It belongs to the Maf family. YhdE subfamily. A divalent metal cation serves as cofactor.

Its subcellular location is the cytoplasm. The catalysed reaction is dTTP + H2O = dTMP + diphosphate + H(+). The enzyme catalyses UTP + H2O = UMP + diphosphate + H(+). Nucleoside triphosphate pyrophosphatase that hydrolyzes dTTP and UTP. May have a dual role in cell division arrest and in preventing the incorporation of modified nucleotides into cellular nucleic acids. In Clostridium perfringens (strain ATCC 13124 / DSM 756 / JCM 1290 / NCIMB 6125 / NCTC 8237 / Type A), this protein is dTTP/UTP pyrophosphatase.